A 246-amino-acid chain; its full sequence is uncharacterized protein (246 aa).

Basic residues-rich tracts occupy residues 1 to 10 (MVWRFQKHIG) and 79 to 97 (TRRRGAGQRHCNQKPKAGR). A disordered region spans residues 1–184 (MVWRFQKHIG…LPPAHVPPTL (184 aa)). Pro residues predominate over residues 158 to 180 (PPFPPPPPPGDPTPPSPLPPAHV).

This is an uncharacterized protein from Homo sapiens (Human).